Here is a 1302-residue protein sequence, read N- to C-terminus: Phosphoribosylformylglycinamidine synthase (1302 aa).

Residues 307 to 318 (GASTGSGGEIRD) and alanine 678 each bind ATP. Mg(2+) contacts are provided by glutamate 718, asparagine 722, and aspartate 891. The region spanning 1049–1302 (MAILREQGVN…MFQNARKNIG (254 aa)) is the Glutamine amidotransferase type-1 domain. Cysteine 1142 acts as the Nucleophile in catalysis. Residues histidine 1267 and glutamate 1269 contribute to the active site.

The protein in the N-terminal section; belongs to the FGAMS family. As to quaternary structure, monomer.

Its subcellular location is the cytoplasm. The catalysed reaction is N(2)-formyl-N(1)-(5-phospho-beta-D-ribosyl)glycinamide + L-glutamine + ATP + H2O = 2-formamido-N(1)-(5-O-phospho-beta-D-ribosyl)acetamidine + L-glutamate + ADP + phosphate + H(+). The protein operates within purine metabolism; IMP biosynthesis via de novo pathway; 5-amino-1-(5-phospho-D-ribosyl)imidazole from N(2)-formyl-N(1)-(5-phospho-D-ribosyl)glycinamide: step 1/2. Functionally, phosphoribosylformylglycinamidine synthase involved in the purines biosynthetic pathway. Catalyzes the ATP-dependent conversion of formylglycinamide ribonucleotide (FGAR) and glutamine to yield formylglycinamidine ribonucleotide (FGAM) and glutamate. This is Phosphoribosylformylglycinamidine synthase from Vibrio parahaemolyticus serotype O3:K6 (strain RIMD 2210633).